We begin with the raw amino-acid sequence, 114 residues long: MEMVNKIACFVLLCMVVVAPHAEALTCGQVTSTLAPCLPYLMNRGPLGGCCGGVKGLLGQAQTTVDRQAACACLKSAASSFTDLDLGKAASLPSTCNVNIPYKISPSTDCSKVQ.

Positions Met1–Glu23 are cleaved as a signal peptide. Intrachain disulfides connect Cys27-Cys73, Cys37-Cys50, Cys51-Cys96, and Cys71-Cys110.

Belongs to the plant LTP family.

Its function is as follows. Plant non-specific lipid-transfer proteins transfer phospholipids as well as galactolipids across membranes. May play a role in wax or cutin deposition in the cell walls of expanding epidermal cells and certain secretory tissues. This Solanum chilense (Tomato) protein is Non-specific lipid-transfer protein 2.